Here is a 451-residue protein sequence, read N- to C-terminus: Phosphoglucosamine mutase (451 aa).

Serine 101 serves as the catalytic Phosphoserine intermediate. Residues serine 101, aspartate 240, aspartate 242, and aspartate 244 each contribute to the Mg(2+) site. Residue serine 101 is modified to Phosphoserine.

This sequence belongs to the phosphohexose mutase family. Requires Mg(2+) as cofactor. In terms of processing, activated by phosphorylation.

It catalyses the reaction alpha-D-glucosamine 1-phosphate = D-glucosamine 6-phosphate. Functionally, catalyzes the conversion of glucosamine-6-phosphate to glucosamine-1-phosphate. The sequence is that of Phosphoglucosamine mutase from Nitrosococcus oceani (strain ATCC 19707 / BCRC 17464 / JCM 30415 / NCIMB 11848 / C-107).